Here is a 121-residue protein sequence, read N- to C-terminus: Flagellar protein FliT (121 aa).

Residues 1–50 (MNHAPHLYFAWQQLVEKSQLMLRLATEEQWDELIASEMAYVNAVQEIAHL) are required for homodimerization. Residues 60–98 (MQEQLRPMLRLILDNESKVKQLLQIRMDELAKLVGQSSV) are fliD binding.

It belongs to the FliT family. As to quaternary structure, homodimer. Interacts with FliD and FlhC.

It localises to the cytoplasm. It is found in the cytosol. Its function is as follows. Dual-function protein that regulates the transcription of class 2 flagellar operons and that also acts as an export chaperone for the filament-capping protein FliD. As a transcriptional regulator, acts as an anti-FlhDC factor; it directly binds FlhC, thus inhibiting the binding of the FlhC/FlhD complex to class 2 promoters, resulting in decreased expression of class 2 flagellar operons. As a chaperone, effects FliD transition to the membrane by preventing its premature polymerization, and by directing it to the export apparatus. The sequence is that of Flagellar protein FliT from Escherichia coli (strain ATCC 8739 / DSM 1576 / NBRC 3972 / NCIMB 8545 / WDCM 00012 / Crooks).